Here is a 497-residue protein sequence, read N- to C-terminus: D-gluconate dehydratase (497 aa).

Position 303 (E303) interacts with Mg(2+). The active-site Proton donor is the H305. The Mg(2+) site is built by E329 and E355. H405 (proton acceptor) is an active-site residue.

The protein belongs to the mandelate racemase/muconate lactonizing enzyme family. GaD subfamily. The cofactor is Mg(2+).

The enzyme catalyses D-gluconate = 2-dehydro-3-deoxy-D-gluconate + H2O. Its pathway is carbohydrate acid metabolism; D-gluconate degradation. Functionally, involved in the degradation of glucose via the Entner-Doudoroff pathway. Catalyzes the dehydration of gluconate to produce 2-keto-3-deoxygluconate (KDG). It is not able to use D-galactonate as substrate. The sequence is that of D-gluconate dehydratase (gad) from Thermoproteus tenax.